Here is a 291-residue protein sequence, read N- to C-terminus: POU class 2 homeobox associating-factor 2 (291 aa).

An OCA domain is found at 7–29; it reads KRVYQGVRVKHTVKDLLAEKRLR. The tract at residues 176–219 is disordered; the sequence is AAPVADSPSLAGPDSGSSSPYRLTSGRSGSSIPSSSQPYTLQPL. The span at 200 to 211 shows a compositional bias: low complexity; the sequence is SGRSGSSIPSSS.

This sequence belongs to the POU2AF family.

Transcriptional coactivator that may regulate cell type-specific differentiation pathways. The chain is POU class 2 homeobox associating-factor 2 (pou2af2) from Danio rerio (Zebrafish).